Reading from the N-terminus, the 214-residue chain is Putative ankyrin repeat protein RF_1081 (214 aa).

A compositionally biased stretch (polar residues) spans 1–14 (MRKQQIPTLSTSAL). Positions 1 to 32 (MRKQQIPTLSTSALDKSPGPGSPDSDIEMKST) are disordered. An ANK repeat occupies 67-135 (NPNALLHEAA…EEPILVTKKD (69 aa)).

The protein is Putative ankyrin repeat protein RF_1081 of Rickettsia felis (strain ATCC VR-1525 / URRWXCal2) (Rickettsia azadi).